A 432-amino-acid chain; its full sequence is Adenosine 3'-phospho 5'-phosphosulfate transporter 1 (432 aa).

Transmembrane regions (helical) follow at residues 5-25 (WWAV…ETPE), 40-60 (VVNA…VQYF), 109-129 (ALKL…WGVL), 154-174 (FLVL…CVLC), 238-258 (WEYL…LSSG), 265-285 (PATT…DSFT), 299-319 (SVQM…GSLL), 353-373 (LFIF…IMTL), and 387-407 (GHTV…ALLL). Position 427 is a phosphoserine (S427).

This sequence belongs to the nucleotide-sugar transporter family. SLC35B subfamily. As to expression, highly expressed in the placenta, pancreas, mammary gland and skeletal muscle. Weakly or not expressed in colon, heart and prostate. Expressed in the brain, predominantly in frontal lobe gray matter, subcortical frontal white matter and cerebellum.

It is found in the golgi apparatus membrane. It carries out the reaction 3'-phosphoadenylyl sulfate(in) + adenosine 3',5'-bisphosphate(out) = 3'-phosphoadenylyl sulfate(out) + adenosine 3',5'-bisphosphate(in). Functionally, probably functions as a 3'-phosphoadenylyl sulfate:adenosine 3',5'-bisphosphate antiporter at the Golgi membranes. Mediates the transport from the cytosol into the lumen of the Golgi of 3'-phosphoadenylyl sulfate/adenosine 3'-phospho 5'-phosphosulfate (PAPS), a universal sulfuryl donor for sulfation events that take place in that compartment. The chain is Adenosine 3'-phospho 5'-phosphosulfate transporter 1 from Homo sapiens (Human).